The chain runs to 506 residues: Maturase K (506 aa).

Belongs to the intron maturase 2 family. MatK subfamily.

Its subcellular location is the plastid. It localises to the chloroplast. Usually encoded in the trnK tRNA gene intron. Probably assists in splicing its own and other chloroplast group II introns. The polypeptide is Maturase K (Angiopteris evecta (Mule's foot fern)).